A 101-amino-acid chain; its full sequence is Urease subunit beta (101 aa).

The protein belongs to the urease beta subunit family. In terms of assembly, heterotrimer of UreA (gamma), UreB (beta) and UreC (alpha) subunits. Three heterotrimers associate to form the active enzyme.

The protein resides in the cytoplasm. It carries out the reaction urea + 2 H2O + H(+) = hydrogencarbonate + 2 NH4(+). It participates in nitrogen metabolism; urea degradation; CO(2) and NH(3) from urea (urease route): step 1/1. The protein is Urease subunit beta of Bradyrhizobium sp. (strain ORS 278).